The chain runs to 365 residues: Alanine racemase (365 aa).

The Proton acceptor; specific for D-alanine role is filled by lysine 32. At lysine 32 the chain carries N6-(pyridoxal phosphate)lysine. Arginine 128 contacts substrate. Catalysis depends on tyrosine 257, which acts as the Proton acceptor; specific for L-alanine. Methionine 305 is a substrate binding site.

This sequence belongs to the alanine racemase family. Pyridoxal 5'-phosphate is required as a cofactor.

The catalysed reaction is L-alanine = D-alanine. It functions in the pathway amino-acid biosynthesis; D-alanine biosynthesis; D-alanine from L-alanine: step 1/1. Functionally, catalyzes the interconversion of L-alanine and D-alanine. May also act on other amino acids. This is Alanine racemase (alr) from Francisella tularensis subsp. mediasiatica (strain FSC147).